We begin with the raw amino-acid sequence, 144 residues long: Peptide methionine sulfoxide reductase MsrB (144 aa).

One can recognise a MsrB domain in the interval 5–128 (QEELRQRIGH…NSAALDFIPY (124 aa)). Residue cysteine 117 is the Nucleophile of the active site.

Belongs to the MsrB Met sulfoxide reductase family.

It carries out the reaction L-methionyl-[protein] + [thioredoxin]-disulfide + H2O = L-methionyl-(R)-S-oxide-[protein] + [thioredoxin]-dithiol. This chain is Peptide methionine sulfoxide reductase MsrB, found in Streptococcus agalactiae serotype Ia (strain ATCC 27591 / A909 / CDC SS700).